Consider the following 227-residue polypeptide: Cytochrome c oxidase subunit 2 (227 aa).

At 1-14 the chain is on the mitochondrial intermembrane side; sequence MAYPLQLGLQDASS. The chain crosses the membrane as a helical span at residues 15 to 45; it reads PIMEELMNFHDHTLMIVFLISSLVLYLISLM. The Mitochondrial matrix segment spans residues 46–59; the sequence is LTTKLIHTSTMDAQ. The helical transmembrane segment at 60-87 threads the bilayer; sequence EVETVWTILPAIILILIALPSLRILYMM. Residues 88 to 227 lie on the Mitochondrial intermembrane side of the membrane; the sequence is DEINNPVLTV…LFENWSLSLT (140 aa). Cu cation-binding residues include His-161, Cys-196, Glu-198, Cys-200, His-204, and Met-207. Glu-198 is a binding site for Mg(2+).

The protein belongs to the cytochrome c oxidase subunit 2 family. In terms of assembly, component of the cytochrome c oxidase (complex IV, CIV), a multisubunit enzyme composed of 14 subunits. The complex is composed of a catalytic core of 3 subunits MT-CO1, MT-CO2 and MT-CO3, encoded in the mitochondrial DNA, and 11 supernumerary subunits COX4I, COX5A, COX5B, COX6A, COX6B, COX6C, COX7A, COX7B, COX7C, COX8 and NDUFA4, which are encoded in the nuclear genome. The complex exists as a monomer or a dimer and forms supercomplexes (SCs) in the inner mitochondrial membrane with NADH-ubiquinone oxidoreductase (complex I, CI) and ubiquinol-cytochrome c oxidoreductase (cytochrome b-c1 complex, complex III, CIII), resulting in different assemblies (supercomplex SCI(1)III(2)IV(1) and megacomplex MCI(2)III(2)IV(2)). Found in a complex with TMEM177, COA6, COX18, COX20, SCO1 and SCO2. Interacts with TMEM177 in a COX20-dependent manner. Interacts with COX20. Interacts with COX16. Cu cation serves as cofactor.

Its subcellular location is the mitochondrion inner membrane. The enzyme catalyses 4 Fe(II)-[cytochrome c] + O2 + 8 H(+)(in) = 4 Fe(III)-[cytochrome c] + 2 H2O + 4 H(+)(out). In terms of biological role, component of the cytochrome c oxidase, the last enzyme in the mitochondrial electron transport chain which drives oxidative phosphorylation. The respiratory chain contains 3 multisubunit complexes succinate dehydrogenase (complex II, CII), ubiquinol-cytochrome c oxidoreductase (cytochrome b-c1 complex, complex III, CIII) and cytochrome c oxidase (complex IV, CIV), that cooperate to transfer electrons derived from NADH and succinate to molecular oxygen, creating an electrochemical gradient over the inner membrane that drives transmembrane transport and the ATP synthase. Cytochrome c oxidase is the component of the respiratory chain that catalyzes the reduction of oxygen to water. Electrons originating from reduced cytochrome c in the intermembrane space (IMS) are transferred via the dinuclear copper A center (CU(A)) of subunit 2 and heme A of subunit 1 to the active site in subunit 1, a binuclear center (BNC) formed by heme A3 and copper B (CU(B)). The BNC reduces molecular oxygen to 2 water molecules using 4 electrons from cytochrome c in the IMS and 4 protons from the mitochondrial matrix. This chain is Cytochrome c oxidase subunit 2 (MT-CO2), found in Taterillus emini (Emin's gerbil).